Here is a 118-residue protein sequence, read N- to C-terminus: uncharacterized protein (118 aa).

Helical transmembrane passes span 6–26, 43–63, and 84–104; these read ILILLVIIITTYFTRIWPFMV, ALSCSVIGMLVVYCFKDIHVL, and IFKVFVLSITLPTILYMVLVQ.

Belongs to the AzlD/HI_1737/HP1330 family.

It localises to the cell membrane. This is an uncharacterized protein from Helicobacter pylori (strain J99 / ATCC 700824) (Campylobacter pylori J99).